We begin with the raw amino-acid sequence, 290 residues long: MRAPLLLESRDYLLSEQMPVAVTNRYPQETFVEHTHQFCEIVIVWRGNGLHVLNDHPYRITCGDVFYIQAADHHSYESVHDLVLDNIIYCPERLHLNAQWHKLLPPLGPEQNQGYWRLTTQGMAQARPIIQQLAQESRKTDSWSIQLTEVLLLQLAIVLKRHRYRAEQAHLLPDGEQLDLIMSALQQSLGAYFDMADFCHKNQLVERSLKQLFRQQTGMSISHYLRQIRLCHAKCLLRGSEHRISDIAARCGFEDSNYFSAVFTREAGMTPRDYRQRFIRSPVLPAKNEP.

The HTH araC/xylS-type domain occupies 179-277 (DLIMSALQQS…GMTPRDYRQR (99 aa)). 2 consecutive DNA-binding regions (H-T-H motif) follow at residues 196 to 217 (ADFC…RQQT) and 244 to 267 (ISDI…TREA).

Binds DNA as a dimer.

The protein localises to the cytoplasm. Functionally, activates expression of the rhaSR operon in response to L-rhamnose. This Yersinia pestis bv. Antiqua (strain Antiqua) protein is HTH-type transcriptional activator RhaR.